We begin with the raw amino-acid sequence, 89 residues long: Small ribosomal subunit protein uS15 (89 aa).

Belongs to the universal ribosomal protein uS15 family. In terms of assembly, part of the 30S ribosomal subunit. Forms a bridge to the 50S subunit in the 70S ribosome, contacting the 23S rRNA.

Its function is as follows. One of the primary rRNA binding proteins, it binds directly to 16S rRNA where it helps nucleate assembly of the platform of the 30S subunit by binding and bridging several RNA helices of the 16S rRNA. Functionally, forms an intersubunit bridge (bridge B4) with the 23S rRNA of the 50S subunit in the ribosome. The chain is Small ribosomal subunit protein uS15 from Vibrio atlanticus (strain LGP32) (Vibrio splendidus (strain Mel32)).